Reading from the N-terminus, the 194-residue chain is dATP triphosphohydrolase (194 aa).

Arg-17 provides a ligand contact to dATP. His-32, His-71, Asp-72, Glu-75, Asp-80, and Asp-123 together coordinate Co(2+).

Belongs to the Caudovirales dATP triphosphohydrolase family. Co(2+) is required as a cofactor.

It catalyses the reaction dATP + H2O = 2'-deoxyadenosine + triphosphate + H(+). The enzyme catalyses dADP + H2O = 2'-deoxyadenosine + diphosphate. The catalysed reaction is dAMP + H2O = 2'-deoxyadenosine + phosphate. Its function is as follows. Catalyzes the hydrolysis of dATP, dADP and dAMP into dA. This step is essential for Z-genome synthesis (containing aminoadenine instead of adenine). Specifically removes dATP and its precursor dADP from the nucleotide pool of the host, preventing the incorporation of A into the phage genome and favoring the integration of the Z-base into the viral genome. This chain is dATP triphosphohydrolase (datZ), found in Salmonella phage PMBT28.